The sequence spans 240 residues: Uridylate kinase (240 aa).

ATP is bound at residue 13 to 16; the sequence is KLSG. The tract at residues 21–26 is involved in allosteric activation by GTP; the sequence is GEQGYG. Gly-55 provides a ligand contact to UMP. ATP-binding residues include Gly-56 and Arg-60. Residues Asp-75 and 137 to 144 each bind UMP; that span reads TGNPFFST. Residues Thr-164, Tyr-170, and Asp-173 each coordinate ATP.

This sequence belongs to the UMP kinase family. As to quaternary structure, homohexamer.

It is found in the cytoplasm. It catalyses the reaction UMP + ATP = UDP + ADP. The protein operates within pyrimidine metabolism; CTP biosynthesis via de novo pathway; UDP from UMP (UMPK route): step 1/1. Allosterically activated by GTP. Inhibited by UTP. Functionally, catalyzes the reversible phosphorylation of UMP to UDP. The sequence is that of Uridylate kinase from Aquifex aeolicus (strain VF5).